Reading from the N-terminus, the 150-residue chain is Transcriptional repressor NrdR (150 aa).

The tract at residues 1–26 (MKCPFCGNSDSKVVDSRPDKGGSGIR) is disordered. A zinc finger lies at 3–34 (CPFCGNSDSKVVDSRPDKGGSGIRRRRECEQC). An ATP-cone domain is found at 49–139 (PLVLKKDGRR…VYRSFRDINE (91 aa)).

It belongs to the NrdR family. Zn(2+) is required as a cofactor.

Its function is as follows. Negatively regulates transcription of bacterial ribonucleotide reductase nrd genes and operons by binding to NrdR-boxes. In Pelobacter propionicus (strain DSM 2379 / NBRC 103807 / OttBd1), this protein is Transcriptional repressor NrdR.